The primary structure comprises 535 residues: RNA-splicing ligase RtcB homolog 1 (535 aa).

Residues 1-16 (MAKSRYSRKNKGKKLQ) are compositionally biased toward basic residues. Residues 1-29 (MAKSRYSRKNKGKKLQRVQENTVSTEEKS) are disordered. 5 residues coordinate Mn(2+): Asp-152, Cys-155, His-260, His-292, and His-383. A GMP-binding site is contributed by 259–263 (NHYLE). Residues 383–384 (HN), 432–435 (GGSM), Ser-439, 458–461 (HGAG), and Lys-534 contribute to the GMP site. Catalysis depends on His-458, which acts as the GMP-histidine intermediate.

This sequence belongs to the RtcB family. Catalytic component of the tRNA-splicing ligase complex. The cofactor is Mn(2+).

The catalysed reaction is a 3'-end 3'-phospho-ribonucleotide-RNA + a 5'-end dephospho-ribonucleoside-RNA + GTP = a ribonucleotidyl-ribonucleotide-RNA + GMP + diphosphate. It catalyses the reaction a 3'-end 2',3'-cyclophospho-ribonucleotide-RNA + a 5'-end dephospho-ribonucleoside-RNA + GTP + H2O = a ribonucleotidyl-ribonucleotide-RNA + GMP + diphosphate + H(+). Its function is as follows. Catalytic subunit of the tRNA-splicing ligase complex that acts by directly joining spliced tRNA halves to mature-sized tRNAs by incorporating the precursor-derived splice junction phosphate into the mature tRNA as a canonical 3',5'-phosphodiester. May act as an RNA ligase with broad substrate specificity, and may function toward other RNAs. This Entamoeba dispar (strain ATCC PRA-260 / SAW760) protein is RNA-splicing ligase RtcB homolog 1.